Reading from the N-terminus, the 552-residue chain is Glutamine--tRNA ligase (552 aa).

Residues 34–44 carry the 'HIGH' region motif; sequence PEPNGYLHIGH. ATP contacts are provided by residues 35 to 37 and 41 to 47; these read EPN and HIGHAKS. Aspartate 67 and tyrosine 212 together coordinate L-glutamine. ATP is bound by residues threonine 231, 261 to 262, and 269 to 271; these read RL and MSK. Residues 268 to 272 carry the 'KMSKS' region motif; sequence IMSKR.

Belongs to the class-I aminoacyl-tRNA synthetase family. Monomer.

Its subcellular location is the cytoplasm. The catalysed reaction is tRNA(Gln) + L-glutamine + ATP = L-glutaminyl-tRNA(Gln) + AMP + diphosphate. The polypeptide is Glutamine--tRNA ligase (Pectobacterium atrosepticum (strain SCRI 1043 / ATCC BAA-672) (Erwinia carotovora subsp. atroseptica)).